We begin with the raw amino-acid sequence, 74 residues long: ATP synthase subunit c (74 aa).

The next 2 membrane-spanning stretches (helical) occupy residues 8–28 and 52–72; these read FIGI…VSNI and IGAG…MLLI.

This sequence belongs to the ATPase C chain family. As to quaternary structure, F-type ATPases have 2 components, F(1) - the catalytic core - and F(0) - the membrane proton channel. F(1) has five subunits: alpha(3), beta(3), gamma(1), delta(1), epsilon(1). F(0) has three main subunits: a(1), b(2) and c(10-14). The alpha and beta chains form an alternating ring which encloses part of the gamma chain. F(1) is attached to F(0) by a central stalk formed by the gamma and epsilon chains, while a peripheral stalk is formed by the delta and b chains.

It localises to the cell inner membrane. F(1)F(0) ATP synthase produces ATP from ADP in the presence of a proton or sodium gradient. F-type ATPases consist of two structural domains, F(1) containing the extramembraneous catalytic core and F(0) containing the membrane proton channel, linked together by a central stalk and a peripheral stalk. During catalysis, ATP synthesis in the catalytic domain of F(1) is coupled via a rotary mechanism of the central stalk subunits to proton translocation. Its function is as follows. Key component of the F(0) channel; it plays a direct role in translocation across the membrane. A homomeric c-ring of between 10-14 subunits forms the central stalk rotor element with the F(1) delta and epsilon subunits. This Rickettsia akari (strain Hartford) protein is ATP synthase subunit c.